A 358-amino-acid chain; its full sequence is Probable branched-chain-amino-acid aminotransferase (358 aa).

N6-(pyridoxal phosphate)lysine is present on K196.

Belongs to the class-IV pyridoxal-phosphate-dependent aminotransferase family. Pyridoxal 5'-phosphate serves as cofactor.

The catalysed reaction is L-leucine + 2-oxoglutarate = 4-methyl-2-oxopentanoate + L-glutamate. The enzyme catalyses L-isoleucine + 2-oxoglutarate = (S)-3-methyl-2-oxopentanoate + L-glutamate. It catalyses the reaction L-valine + 2-oxoglutarate = 3-methyl-2-oxobutanoate + L-glutamate. The protein operates within amino-acid biosynthesis; L-isoleucine biosynthesis; L-isoleucine from 2-oxobutanoate: step 4/4. It functions in the pathway amino-acid biosynthesis; L-leucine biosynthesis; L-leucine from 3-methyl-2-oxobutanoate: step 4/4. Its pathway is amino-acid biosynthesis; L-valine biosynthesis; L-valine from pyruvate: step 4/4. In terms of biological role, acts on leucine, isoleucine and valine. In Staphylococcus epidermidis (strain ATCC 35984 / DSM 28319 / BCRC 17069 / CCUG 31568 / BM 3577 / RP62A), this protein is Probable branched-chain-amino-acid aminotransferase (ilvE).